The following is a 936-amino-acid chain: Protein NLP2 (936 aa).

A disordered region spans residues 99–130; sequence IMSVNPTEAEKTGKSSGELGSDDGAHQGSSMV. Positions 550 to 635 constitute an RWP-RK domain; the sequence is QPSSIGHAEK…INSVHGVDRS (86 aa). Disordered stretches follow at residues 666 to 697, 753 to 782, and 794 to 827; these read PSVGKTVEENSDLKSEEGCSLPDGSQRQSCQL, CTNPSSSLRPSSESTRNQIVGRNSPSIQQE, and DKDHMHPSTSGMTDSSSGSASSHPTFKQNTRSAL. The segment covering 671 to 682 has biased composition (basic and acidic residues); that stretch reads TVEENSDLKSEE. Residues 688–697 are compositionally biased toward polar residues; that stretch reads DGSQRQSCQL. Positions 754–769 are enriched in low complexity; that stretch reads TNPSSSLRPSSESTRN. Polar residues predominate over residues 770-781; sequence QIVGRNSPSIQQ. Positions 801–815 are enriched in low complexity; it reads STSGMTDSSSGSASS. The segment covering 816-825 has biased composition (polar residues); the sequence is HPTFKQNTRS. The region spanning 834 to 916 is the PB1 domain; sequence ALTVKATYNG…RIVKLQVRDL (83 aa).

It localises to the nucleus. Its function is as follows. Probable transcription factor. This is Protein NLP2 from Oryza sativa subsp. japonica (Rice).